We begin with the raw amino-acid sequence, 119 residues long: Large ribosomal subunit protein uL18 (119 aa).

The tract at residues 1–23 (MISKPDKNKTRQRRHARVRGKIS) is disordered. Basic residues predominate over residues 10–20 (TRQRRHARVRG).

It belongs to the universal ribosomal protein uL18 family. As to quaternary structure, part of the 50S ribosomal subunit; part of the 5S rRNA/L5/L18/L25 subcomplex. Contacts the 5S and 23S rRNAs.

Its function is as follows. This is one of the proteins that bind and probably mediate the attachment of the 5S RNA into the large ribosomal subunit, where it forms part of the central protuberance. In Lacticaseibacillus casei (strain BL23) (Lactobacillus casei), this protein is Large ribosomal subunit protein uL18.